The chain runs to 312 residues: Glyoxylate/hydroxypyruvate reductase A (312 aa).

Arg-227 is a catalytic residue. His-275 acts as the Proton donor in catalysis.

It belongs to the D-isomer specific 2-hydroxyacid dehydrogenase family. GhrA subfamily.

It localises to the cytoplasm. It carries out the reaction glycolate + NADP(+) = glyoxylate + NADPH + H(+). The enzyme catalyses (R)-glycerate + NAD(+) = 3-hydroxypyruvate + NADH + H(+). The catalysed reaction is (R)-glycerate + NADP(+) = 3-hydroxypyruvate + NADPH + H(+). In terms of biological role, catalyzes the NADPH-dependent reduction of glyoxylate and hydroxypyruvate into glycolate and glycerate, respectively. The protein is Glyoxylate/hydroxypyruvate reductase A of Shigella boydii serotype 18 (strain CDC 3083-94 / BS512).